A 328-amino-acid chain; its full sequence is MSTQGFLKPRSIEVEPVGPNHAKIVMEPFERGYGHTLGNALRRILLSSMTGYAPTEVQMTGVVHEYSTIPGVREDVVDILLNLKGVVFKLHNRDEVTLILRKNGSGLVLASDIELPHDVEIVNPEHPICNLTDAGKLEMQIKVEKGRGYVPGNVRALSEDRTHTIGRIILDASFSPVRRVSYAVESARVEQRTDLDKLVLDIETNGVISPEEAVRQSARILMDQISVFAALEGAGDSYEAPVRGTPQIDPVLLRPVDDLELTVRSANCLKAENIYYIGDLIQRTENELLKTPNLGRKSLNEIKEVLAARGLTLGMKLENWPPLGLERP.

Residues 1 to 232 (MSTQGFLKPR…DQISVFAALE (232 aa)) form an alpha N-terminal domain (alpha-NTD) region. An alpha C-terminal domain (alpha-CTD) region spans residues 248–328 (IDPVLLRPVD…NWPPLGLERP (81 aa)).

Belongs to the RNA polymerase alpha chain family. Homodimer. The RNAP catalytic core consists of 2 alpha, 1 beta, 1 beta' and 1 omega subunit. When a sigma factor is associated with the core the holoenzyme is formed, which can initiate transcription.

The enzyme catalyses RNA(n) + a ribonucleoside 5'-triphosphate = RNA(n+1) + diphosphate. In terms of biological role, DNA-dependent RNA polymerase catalyzes the transcription of DNA into RNA using the four ribonucleoside triphosphates as substrates. This chain is DNA-directed RNA polymerase subunit alpha, found in Bordetella avium (strain 197N).